The following is a 354-amino-acid chain: Arginase-2, mitochondrial (354 aa).

The transit peptide at 1–22 (MFLRSSASRLLHGQIPCVLTRS) directs the protein to the mitochondrion. 4 residues coordinate Mn(2+): histidine 120, aspartate 143, histidine 145, and aspartate 147. Substrate contacts are provided by residues 145–149 (HADIN), 156–158 (SGN), and glutamate 202. Mn(2+) contacts are provided by aspartate 251 and aspartate 253. Residues threonine 265 and glutamate 296 each coordinate substrate.

Belongs to the arginase family. As to quaternary structure, homotrimer. Mn(2+) serves as cofactor.

Its subcellular location is the mitochondrion. It catalyses the reaction L-arginine + H2O = urea + L-ornithine. The protein operates within nitrogen metabolism; urea cycle; L-ornithine and urea from L-arginine: step 1/1. Its function is as follows. May play a role in the regulation of extra-urea cycle arginine metabolism and also in down-regulation of nitric oxide synthesis. Extrahepatic arginase functions to regulate L-arginine bioavailability to nitric oxid synthase (NOS). Arginine metabolism is a critical regulator of innate and adaptive immune responses. Seems to be involved in negative regulation of the survival capacity of activated CD4(+) and CD8(+) T cells. May suppress inflammation-related signaling in asthmatic airway epithelium. May contribute to the immune evasion of H.pylori by restricting M1 macrophage activation and polyamine metabolism. May play a role in promoting prenatal immune suppression. Regulates RPS6KB1 signaling, which promotes endothelial cell senescence and inflammation and implicates NOS3/eNOS dysfunction. Can inhibit endothelial autophagy independently of its enzymatic activity implicating mTORC2 signaling. Involved in vascular smooth muscle cell senescence and apoptosis independently of its enzymatic activity. In Mus musculus (Mouse), this protein is Arginase-2, mitochondrial (Arg2).